A 455-amino-acid chain; its full sequence is Ribulose bisphosphate carboxylase large chain (455 aa).

N6,N6,N6-trimethyllysine is present on Lys-5. The substrate site is built by Asn-114 and Thr-164. The active-site Proton acceptor is the Lys-166. Lys-168 provides a ligand contact to substrate. The Mg(2+) site is built by Lys-192, Asp-194, and Glu-195. The residue at position 192 (Lys-192) is an N6-carboxylysine. His-285 (proton acceptor) is an active-site residue. Substrate is bound by residues Arg-286, His-318, and Ser-370.

Belongs to the RuBisCO large chain family. Type I subfamily. In terms of assembly, heterohexadecamer of 8 large chains and 8 small chains; disulfide-linked. The disulfide link is formed within the large subunit homodimers. The cofactor is Mg(2+). The disulfide bond which can form in the large chain dimeric partners within the hexadecamer appears to be associated with oxidative stress and protein turnover.

The protein resides in the plastid. Its subcellular location is the chloroplast. It catalyses the reaction 2 (2R)-3-phosphoglycerate + 2 H(+) = D-ribulose 1,5-bisphosphate + CO2 + H2O. The enzyme catalyses D-ribulose 1,5-bisphosphate + O2 = 2-phosphoglycolate + (2R)-3-phosphoglycerate + 2 H(+). RuBisCO catalyzes two reactions: the carboxylation of D-ribulose 1,5-bisphosphate, the primary event in carbon dioxide fixation, as well as the oxidative fragmentation of the pentose substrate in the photorespiration process. Both reactions occur simultaneously and in competition at the same active site. In Lupinus latifolius (Broad-leaved lupine), this protein is Ribulose bisphosphate carboxylase large chain.